The chain runs to 401 residues: Imidazolonepropionase (401 aa).

Residues H66 and H68 each coordinate Fe(3+). Positions 66 and 68 each coordinate Zn(2+). 3 residues coordinate 4-imidazolone-5-propanoate: R75, Y138, and H171. Residue Y138 participates in N-formimidoyl-L-glutamate binding. H236 contacts Fe(3+). Position 236 (H236) interacts with Zn(2+). Q239 is a binding site for 4-imidazolone-5-propanoate. Fe(3+) is bound at residue D311. A Zn(2+)-binding site is contributed by D311. Residues N313 and G315 each contribute to the N-formimidoyl-L-glutamate site. T316 is a 4-imidazolone-5-propanoate binding site.

The protein belongs to the metallo-dependent hydrolases superfamily. HutI family. It depends on Zn(2+) as a cofactor. Requires Fe(3+) as cofactor.

Its subcellular location is the cytoplasm. It carries out the reaction 4-imidazolone-5-propanoate + H2O = N-formimidoyl-L-glutamate. Its pathway is amino-acid degradation; L-histidine degradation into L-glutamate; N-formimidoyl-L-glutamate from L-histidine: step 3/3. In terms of biological role, catalyzes the hydrolytic cleavage of the carbon-nitrogen bond in imidazolone-5-propanoate to yield N-formimidoyl-L-glutamate. It is the third step in the universal histidine degradation pathway. This Pseudomonas putida (strain ATCC 47054 / DSM 6125 / CFBP 8728 / NCIMB 11950 / KT2440) protein is Imidazolonepropionase.